Reading from the N-terminus, the 148-residue chain is uncharacterized protein (148 aa).

The segment covering Lys-97–Glu-112 has biased composition (basic and acidic residues). A disordered region spans residues Lys-97–Asn-126.

This is an uncharacterized protein from Caenorhabditis elegans.